A 363-amino-acid polypeptide reads, in one-letter code: Putative glutamate--cysteine ligase 2-3 (363 aa).

It belongs to the glutamate--cysteine ligase type 2 family. YbdK subfamily.

It carries out the reaction L-cysteine + L-glutamate + ATP = gamma-L-glutamyl-L-cysteine + ADP + phosphate + H(+). Its function is as follows. ATP-dependent carboxylate-amine ligase which exhibits weak glutamate--cysteine ligase activity. In Rubrobacter xylanophilus (strain DSM 9941 / JCM 11954 / NBRC 16129 / PRD-1), this protein is Putative glutamate--cysteine ligase 2-3.